A 492-amino-acid polypeptide reads, in one-letter code: Serine incorporator 4 (492 aa).

10 helical membrane passes run 58-78 (FYILLHMGASAICCLLLSKTV), 113-133 (AVYRVCAGTATFHLLQAVLLV), 148-168 (SFWSLKLLFLLGLCTAAFCIP), 179-199 (IGICGGFTFILLQLVLITAFA), 217-237 (FLGVLLATLGFYSMAGVGAVL), 254-274 (LLSLHLCFCGLLSLLSIAPCI), 281-301 (SGLLQASIISCYIMYLTFSAL), 330-350 (IPDASVAVFSASIMYACVLFA), 421-441 (GFHFAFFLASLYVMVTLTNWF), and 464-484 (VASCWACVLLYLGLLLAPLLA).

The protein belongs to the TDE1 family.

The protein resides in the membrane. Its function is as follows. Incorporates a polar amino acid serine into membranes and facilitates the synthesis of two serine-derived lipids, phosphatidylserine and sphingolipids. This chain is Serine incorporator 4 (Serinc4), found in Rattus norvegicus (Rat).